The chain runs to 55 residues: MNWKVLEHVPLLLYILAAKTLILCLAFAGVKMYQRRSLEGKLQAEKRKQSEKKAS.

A helical transmembrane segment spans residues 9–29 (VPLLLYILAAKTLILCLAFAG). Positions 34 to 54 (QRRSLEGKLQAEKRKQSEKKA) form a coiled coil.

As to expression, expressed in brain, heart, kidney, thymus, liver, stomach, muscle, lung, testis, ovary, skin and eye.

The protein resides in the membrane. This chain is Small integral membrane protein 11, found in Mus musculus (Mouse).